The primary structure comprises 784 residues: Ribosome biogenesis protein BOP1 homolog (784 aa).

Over residues 1-11 (MTKKLALKRRG) the composition is skewed to basic residues. Residues 1–159 (MTKKLALKRR…DSDTSDEEDI (159 aa)) are disordered. Composition is skewed to acidic residues over residues 27–36 (SENEEEEEDL), 45–54 (EDSTDDEGID), 62–73 (SEELQFESDEEG), and 84–111 (AEED…EDEE). Basic and acidic residues-rich tracts occupy residues 112 to 123 (KVSKSKQSDDKP) and 138 to 148 (LPKRDSSKPEY). Positions 149–158 (QDSDTSDEED) are enriched in acidic residues. 7 WD repeats span residues 445-486 (GHTD…RTIE), 488-526 (DEVV…KVLV), 570-612 (THFK…SQIP), 615-653 (KSKG…LVKK), 656-695 (TNSK…KPYQ), 699-738 (LHRN…DLLQ), and 754-784 (RDEF…RLYT).

Belongs to the WD repeat BOP1/ERB1 family.

The protein localises to the nucleus. It is found in the nucleolus. Its subcellular location is the nucleoplasm. Required for maturation of ribosomal RNAs and formation of the large ribosomal subunit. This is Ribosome biogenesis protein BOP1 homolog from Drosophila sechellia (Fruit fly).